We begin with the raw amino-acid sequence, 82 residues long: Penaeidin-3i (82 aa).

Positions 1–19 are cleaved as a signal peptide; that stretch reads MRLVVCLVFLASFALVCQG. Q20 is modified (pyrrolidone carboxylic acid). Cystine bridges form between C55–C73 and C67–C74. S81 is modified (serine amide).

Belongs to the penaeidin family.

It is found in the cytoplasmic granule. Its function is as follows. Antibacterial and antifungal activity. Presents chitin-binding activity. This chain is Penaeidin-3i, found in Penaeus vannamei (Whiteleg shrimp).